The following is a 578-amino-acid chain: Zinc finger-containing ubiquitin peptidase 1 (578 aa).

The segment at 2–24 adopts a C2H2-type 1 zinc-finger fold; sequence LSCDICGETVTSEPDMKAHLIVH. The C2H2-type 2; atypical zinc finger occupies 29 to 52; it reads IVCPFCKLSGVSYDEMCFHIETAH. 2 consecutive C2H2-type zinc fingers follow at residues 154 to 177 and 193 to 215; these read PECP…KTTH and YDCP…VDLH. Positions 226-248 are MIU; that stretch reads DRVQCSGDLQLAHQLQQEEDRKR. Positions 249-274 are zUBD/ZHA; it reads RSEESRQEIEEFQKLQRQYGLDNSGG. The residue at position 262 (lysine 262) is an N6-acetyllysine. Residue cysteine 360 is the Nucleophile of the active site. Catalysis depends on histidine 491, which acts as the Proton acceptor. Aspartate 512 is an active-site residue.

This sequence belongs to the peptidase C78 family. ZUFSP subfamily. As to quaternary structure, interacts with RPA1 and RPA2.

The protein resides in the cytoplasm. It localises to the nucleus. The catalysed reaction is Thiol-dependent hydrolysis of ester, thioester, amide, peptide and isopeptide bonds formed by the C-terminal Gly of ubiquitin (a 76-residue protein attached to proteins as an intracellular targeting signal).. Functionally, deubiquitinase with endodeubiquitinase activity that specifically interacts with and cleaves 'Lys-63'-linked long polyubiquitin chains. Shows only weak activity against 'Lys-11' and 'Lys-48'-linked chains. Plays an important role in genome stability pathways, functioning to prevent spontaneous DNA damage and also promote cellular survival in response to exogenous DNA damage. Modulates the ubiquitination status of replication protein A (RPA) complex proteins in response to replication stress. This Macaca fascicularis (Crab-eating macaque) protein is Zinc finger-containing ubiquitin peptidase 1.